Reading from the N-terminus, the 436-residue chain is Trigger factor (436 aa).

One can recognise a PPIase FKBP-type domain in the interval 163-248 (GDRVTVDFEG…VKKIEAAHLP (86 aa)).

Belongs to the FKBP-type PPIase family. Tig subfamily.

The protein resides in the cytoplasm. It carries out the reaction [protein]-peptidylproline (omega=180) = [protein]-peptidylproline (omega=0). Involved in protein export. Acts as a chaperone by maintaining the newly synthesized protein in an open conformation. Functions as a peptidyl-prolyl cis-trans isomerase. The sequence is that of Trigger factor from Acidovorax ebreus (strain TPSY) (Diaphorobacter sp. (strain TPSY)).